Here is a 236-residue protein sequence, read N- to C-terminus: MATMETTTQKDTNILKSGLKKTIGVLNEAVLQNGREVEAVQAGNSDTMEDTETTTIGYISIKDYAYADSNPLHYGYFDGDNEEDEMVSDSSNGEDTYNKRQSITLPDDYIVNQRAVALYDFEPENDNELRLAEGDIVFISYKHGQGWLVAENESGSKTGLVPEEFVSYIQPEDGENEVENKARPFYLTHLITQSVSPKNNIDNTNEDEYDDNDEWEDIDDVAEVEADMKTKLDISD.

The residue at position 102 (S102) is a Phosphoserine. In terms of domain architecture, SH3 spans 110-171 (IVNQRAVALY…PEEFVSYIQP (62 aa)). A phosphoserine mark is found at S196 and S235.

In terms of assembly, interacts with PBS2 and PTC1.

It localises to the cytoplasm. Negatively regulates the high-osmolarity glycerol (HOG) pathway through its negative regulation of the HOG1 kinase activity. Mediates the binding between the PTC1 phosphatase and the PBS2 MAP/ERK kinase (MEK). With PTC1, regulates endoplasmic reticulum inheritance through the cell wall integrity (CWI) MAPK pathway by modulating the MAPK, SLT2. This is NAP1-binding protein 2 (NBP2) from Saccharomyces cerevisiae (strain ATCC 204508 / S288c) (Baker's yeast).